An 890-amino-acid chain; its full sequence is Alanine--tRNA ligase (890 aa).

H568, H572, C680, and H684 together coordinate Zn(2+).

The protein belongs to the class-II aminoacyl-tRNA synthetase family. It depends on Zn(2+) as a cofactor.

It is found in the cytoplasm. It catalyses the reaction tRNA(Ala) + L-alanine + ATP = L-alanyl-tRNA(Ala) + AMP + diphosphate. In terms of biological role, catalyzes the attachment of alanine to tRNA(Ala) in a two-step reaction: alanine is first activated by ATP to form Ala-AMP and then transferred to the acceptor end of tRNA(Ala). Also edits incorrectly charged Ser-tRNA(Ala) and Gly-tRNA(Ala) via its editing domain. The protein is Alanine--tRNA ligase of Psychrobacter arcticus (strain DSM 17307 / VKM B-2377 / 273-4).